The primary structure comprises 301 residues: Phomoidride biosynthesis cluster protein F (301 aa).

Part of the gene cluster that mediates the biosynthesis of the antihypercholesterolemic agents phomoidrides which are dimeric anhydrides. The function of phiF within the pathway has still to be determined. The pathway begins with the highly reducing polyketide synthase phiA that catalyzes the formation of a C12-fatty acyl-ACP, starting from one acetate and 5 malonate units. The hydrolase phiM is involved in the release of the C12-fatty acyl chain from phiA. The alkylcitrate synthase (ACS) phiJ and the alkylcitrate dehydratase (ACDH) phiI then give rise to decarboxylated monomeric anhydrides by coupling the C12-fatty acyl chain with oxalacetic acid. The cyclase phiC is responsible for the dimerization of the monomeric anhydrides which leads to the production of prephomoidride that contains the characteristic bicyclo[4.3.1]deca-1,6-diene system of phomoidrides. Iterative oxidation catalyzed by the alpha-ketoglutarate-dependent dioxygenase phiK produced then phomoidride A. Finally, the methyltransferase phiE converts phomoidride A to phomoidride B via an acetalization reaction. The phosphatidylethanolamine-binding protein phiB and phiN are not essential for dimerization and their functions have still to be determined. In Fungal sp. (strain ATCC 74256), this protein is Phomoidride biosynthesis cluster protein F.